A 113-amino-acid polypeptide reads, in one-letter code: Hydrogenase maturation factor HypA (113 aa).

H2 is a binding site for Ni(2+). The Zn(2+) site is built by C73, C76, C89, and C92.

The protein belongs to the HypA/HybF family.

Its function is as follows. Involved in the maturation of [NiFe] hydrogenases. Required for nickel insertion into the metal center of the hydrogenase. In Bradyrhizobium sp. (strain ORS 278), this protein is Hydrogenase maturation factor HypA.